Reading from the N-terminus, the 119-residue chain is Beta-2-microglobulin (119 aa).

An N-terminal signal peptide occupies residues 1–20; the sequence is MAPFVAIALLVLLSLSGLEA. An Ig-like C1-type domain is found at 25-114; the sequence is PKIQVYSRHP…VTFSTPKTVK (90 aa). The cysteines at positions 45 and 100 are disulfide-linked.

This sequence belongs to the beta-2-microglobulin family. Heterodimer of an alpha chain and a beta chain. Beta-2-microglobulin is the beta-chain of major histocompatibility complex class I molecules.

Its subcellular location is the secreted. Its function is as follows. Component of the class I major histocompatibility complex (MHC). Involved in the presentation of peptide antigens to the immune system. This chain is Beta-2-microglobulin (B2M), found in Cheracebus torquatus (Collared titi monkey).